The following is a 355-amino-acid chain: Methionine import ATP-binding protein MetN (355 aa).

The region spanning Leu8–Ile250 is the ABC transporter domain. Residue Gly42–Ser49 coordinates ATP.

The protein belongs to the ABC transporter superfamily. Methionine importer (TC 3.A.1.24) family. The complex is composed of two ATP-binding proteins (MetN), two transmembrane proteins (MetI) and a solute-binding protein (MetQ).

Its subcellular location is the cell membrane. The catalysed reaction is L-methionine(out) + ATP + H2O = L-methionine(in) + ADP + phosphate + H(+). It carries out the reaction D-methionine(out) + ATP + H2O = D-methionine(in) + ADP + phosphate + H(+). In terms of biological role, part of the ABC transporter complex MetNIQ involved in methionine import. Responsible for energy coupling to the transport system. The sequence is that of Methionine import ATP-binding protein MetN from Streptococcus thermophilus (strain CNRZ 1066).